Reading from the N-terminus, the 310-residue chain is uncharacterized protein (310 aa).

Helical transmembrane passes span 1 to 21 (MIYFFISSLFFLILITLMFSK), 38 to 58 (FFFYFLLFVLFIFIFWLVVYT), 74 to 94 (TSYFLEILLSIDNVFAWFFIF), 110 to 130 (YGLWGALILRSIFSFSGSFLF), 135 to 155 (WILYLFGGFFILTSLKFIFFS), 194 to 214 (IFITPLFVSLILIELSDIVFS), 228 to 248 (LFIIFSSNFFAVLGLRSMYLF), 256 to 276 (FPIMKYALSLILMFIGFKILI), and 284 to 304 (IFLTLAVILIILITTFLINLI).

This sequence belongs to the TerC family.

It is found in the cell membrane. This is an uncharacterized protein from Buchnera aphidicola subsp. Schizaphis graminum (strain Sg).